The following is a 637-amino-acid chain: 5-hmdU DNA kinase (637 aa).

Residues 249-269 form a disordered region; sequence AEKGVKRGKKGRKTSPVAKTL.

This sequence belongs to the thymidylate kinase family. 5-hmdU DNA kinase subfamily.

The enzyme catalyses 5-hydroxymethyl-dUMP in DNA + ATP = 5-phosphomethyl-dUMP in DNA + ADP + H(+). Phosphorylates 5-hydroxymethyluracil (5hmdU) into 5-phosphomethyl-2'-deoxyuridine (5- PmdU) on DNA as a step in the pathway leading to thymidine hypermodifications in the viral genome. The phosphate is added internally to the DNA polymer. As a final result of the pathway of hypermodification, alpha-glutamylthymidine (YdTMP) substitutes for about 20% of the thymidines in the viral DNA, the 80% left are dTMP. These modifications probably prevent degradation of viral genome by the host restriction-modification antiviral defense system. This is 5-hmdU DNA kinase from Bacillus phage SP10 (Bacillus phage SP-10).